A 605-amino-acid chain; its full sequence is Protein kinase wis1 (605 aa).

The segment covering 1–20 has biased composition (polar residues); sequence MSSPNNQPLSCSLRQLSISP. Positions 1-141 are disordered; sequence MSSPNNQPLS…TPPGPFPGGL (141 aa). Composition is skewed to low complexity over residues 31–73 and 90–105; these read GSLL…SSPS and RLGR…SLNL. A compositionally biased stretch (basic and acidic residues) spans 106-115; the sequence is DMKDPSEKPR. Ser168 is modified (phosphoserine). Residues 188 to 200 are compositionally biased toward polar residues; it reads SQLAGRLSNSPVK. The interval 188–263 is disordered; sequence SQLAGRLSNS…PSSMASRRGL (76 aa). Residues 244–256 show a composition bias toward low complexity; sequence SNSNPTSPVSPSS. Position 253 is a phosphoserine (Ser253). A Protein kinase domain is found at 320-579; the sequence is IIKLEELGKG…YHELANHPWL (260 aa). ATP contacts are provided by residues 326 to 334 and Lys349; that span reads LGKGNYGVV. The Proton acceptor role is filled by Asp441. Phosphoserine is present on Ser469. Position 473 is a phosphothreonine (Thr473).

Belongs to the protein kinase superfamily. STE Ser/Thr protein kinase family. MAP kinase kinase subfamily. In terms of processing, dephosphorylated by pyp1 and pyp2.

It carries out the reaction L-seryl-[protein] + ATP = O-phospho-L-seryl-[protein] + ADP + H(+). It catalyses the reaction L-threonyl-[protein] + ATP = O-phospho-L-threonyl-[protein] + ADP + H(+). The catalysed reaction is L-tyrosyl-[protein] + ATP = O-phospho-L-tyrosyl-[protein] + ADP + H(+). In terms of biological role, dosage-dependent regulator of mitosis with serine/ threonine protein kinase activity. May play a role in the integration of nutritional sensing with the control over entry into mitosis. It may interact with cdc25, wee1 and win1. May activate sty1. The polypeptide is Protein kinase wis1 (wis1) (Schizosaccharomyces pombe (strain 972 / ATCC 24843) (Fission yeast)).